Consider the following 121-residue polypeptide: Large ribosomal subunit protein uL24 (121 aa).

This sequence belongs to the universal ribosomal protein uL24 family. Part of the 50S ribosomal subunit.

One of two assembly initiator proteins, it binds directly to the 5'-end of the 23S rRNA, where it nucleates assembly of the 50S subunit. Functionally, located at the polypeptide exit tunnel on the outside of the subunit. This chain is Large ribosomal subunit protein uL24, found in Pyrococcus furiosus (strain ATCC 43587 / DSM 3638 / JCM 8422 / Vc1).